Here is a 285-residue protein sequence, read N- to C-terminus: Cold sensitive U2 snRNA suppressor 2 (285 aa).

The RRM 1 domain maps to 45–130; it reads TSIYISGLPT…KQIRVERAQF (86 aa). The segment covering 135–149 has biased composition (basic and acidic residues); the sequence is GDNMHGKENDLKEFN. The tract at residues 135-154 is disordered; the sequence is GDNMHGKENDLKEFNGPEPP. Residue serine 163 is modified to Phosphoserine. The RRM 2 domain maps to 183 to 265; it reads RTVIFANVFN…QKLLAFISGD (83 aa). Residues 265–285 are disordered; the sequence is DENTSSTSDKNEDSEVEDDLI. Residues 276 to 285 are compositionally biased toward acidic residues; the sequence is EDSEVEDDLI.

The protein belongs to the HTATSF1 family. In terms of assembly, interacts with PRP11. Associates with the U2 snRNA.

In terms of biological role, U2 snRNP protein which helps to refold U2 into a structure favorable for its binding to SF3b and SF3a prior to spliceosome assembly. Mediates functional interactions between U2 RNA and PRP5. Enforces ATP dependence during formation of the prespliceosome by brokering an interaction between PRP5 and the U2 snRNP that depends on correct U2 RNA structure. The chain is Cold sensitive U2 snRNA suppressor 2 (CUS2) from Saccharomyces cerevisiae (strain ATCC 204508 / S288c) (Baker's yeast).